The primary structure comprises 195 residues: MPYGTRYPTLAFHTGGVGESDDGMPPQPFETFCYDSALLQAKIENFNIVPYTSVLPKELFGNIVPVDQCVKFFKHGAVLEVIMAGRGASTVEGTHAITTGVGICWGQDKNGELIGGWAAEYVEFFPTWINDEIAESHAKMWLKKSLQHELDLRSVVKHSEFQYFHNYINIKQKYGFSLTALGFLNFENADPVTIK.

Serine 53 carries the pyruvic acid (Ser) modification.

Belongs to the pyruvoyl-dependent arginine decarboxylase family. In terms of assembly, trimer of an alpha-beta dimer. The cofactor is pyruvate.

It is found in the cytoplasm. It catalyses the reaction L-arginine + H(+) = agmatine + CO2. In terms of biological role, part of the AaxABC system, catalyzes the decarboxylation of L-arginine. The arginine uptake by the bacterium in the macrophage may be a virulence factor against the host innate immune response. The polypeptide is Pyruvoyl-dependent arginine decarboxylase AaxB (aaxB) (Chlamydia abortus (strain DSM 27085 / S26/3) (Chlamydophila abortus)).